The following is a 76-amino-acid chain: uncharacterized protein (76 aa).

Residues 1-28 (MSTEKLEASEEPQAPLANTSETNSIKGD) form a disordered region. Residues 16-26 (LANTSETNSIK) are compositionally biased toward polar residues.

It localises to the cytoplasm. Its subcellular location is the bud. The protein localises to the bud neck. This is an uncharacterized protein from Saccharomyces cerevisiae (strain ATCC 204508 / S288c) (Baker's yeast).